Reading from the N-terminus, the 272-residue chain is MYSLSPDLSFLSPMDVNHLSDENTAIEINNLCLNYGKTSALSNIEMRIPKGQVTAFIGPSGCGKSTLLRCINRMNDLVDNCKIKGSIKLFGDDIYHPDTDIPSLRRRVGMVFQRPNPFPKSIYENVVYGLRLQGIKEARVLDEAVEEALKAAALWDEVKHRLHENAFGLSGGQQQRLVIARAIAIEPEVLLLDEPTSALDPISTLTIEELIYELKSKYTVVIVTHNMQQAARVSDYTAFINQGKLVEYGNANTIFTSPIHKQTEDYITGRYG.

In terms of domain architecture, ABC transporter spans 26–267 (IEINNLCLNY…PIHKQTEDYI (242 aa)). 58–65 (GPSGCGKS) is a binding site for ATP.

Belongs to the ABC transporter superfamily. Phosphate importer (TC 3.A.1.7) family. In terms of assembly, the complex is composed of two ATP-binding proteins (PstB), two transmembrane proteins (PstC and PstA) and a solute-binding protein (PstS).

It is found in the cell inner membrane. The catalysed reaction is phosphate(out) + ATP + H2O = ADP + 2 phosphate(in) + H(+). In terms of biological role, part of the ABC transporter complex PstSACB involved in phosphate import. Responsible for energy coupling to the transport system. This is Phosphate import ATP-binding protein PstB 2 from Aliivibrio fischeri (strain ATCC 700601 / ES114) (Vibrio fischeri).